We begin with the raw amino-acid sequence, 502 residues long: Maturase K (502 aa).

This sequence belongs to the intron maturase 2 family. MatK subfamily.

It is found in the plastid. Its subcellular location is the chloroplast. Functionally, usually encoded in the trnK tRNA gene intron. Probably assists in splicing its own and other chloroplast group II introns. This Tilia americana (American basswood) protein is Maturase K.